The following is a 503-amino-acid chain: 2-phosphoxylose phosphatase 1 (503 aa).

The Cytoplasmic segment spans residues 1 to 6; it reads MLARSR. Residues 7 to 27 form a helical; Signal-anchor for type II membrane protein membrane-spanning segment; it reads FILVLVVGALLAVLSFSLQYL. Over 28-503 the chain is Lumenal; the sequence is HLIPTNPVAE…YQQACHQTVL (476 aa). Residues 38 to 63 are disordered; it reads QRSAGRSRKRVNPVLHTDPPAPDPIR. Asn-73 is a glycosylation site (N-linked (GlcNAc...) asparagine). The active-site Nucleophile is His-98. An N-linked (GlcNAc...) asparagine glycan is attached at Asn-365. Asp-396 acts as the Proton donor in catalysis. An N-linked (GlcNAc...) asparagine glycan is attached at Asn-490.

This sequence belongs to the histidine acid phosphatase family.

The protein resides in the golgi apparatus membrane. It catalyses the reaction 3-O-[beta-D-GlcA-(1-&gt;3)-beta-D-Gal-(1-&gt;3)-beta-D-Gal-(1-&gt;4)-beta-D-2-O-P-Xyl]-L-seryl-[protein] + H2O = 3-O-(beta-D-GlcA-(1-&gt;3)-beta-D-Gal-(1-&gt;3)-beta-D-Gal-(1-&gt;4)-beta-D-Xyl)-L-seryl-[protein] + phosphate. Functionally, responsible for the 2-O-dephosphorylation of xylose in the glycosaminoglycan-protein linkage region of proteoglycans thereby regulating the amount of mature glycosaminoglycan (GAG) chains. Sulfated glycosaminoglycans (GAGs), including heparan sulfate and chondroitin sulfate, are synthesized on the so-called common GAG-protein linkage region (GlcUAbeta1-3Galbeta1-3Galbeta1-4Xylbeta1-O-Ser) of core proteins, which is formed by the stepwise addition of monosaccharide residues by the respective specific glycosyltransferases. In Danio rerio (Zebrafish), this protein is 2-phosphoxylose phosphatase 1.